The primary structure comprises 319 residues: Malate dehydrogenase (319 aa).

Residues 11–16 and Asp-36 each bind NAD(+); that span reads GAGNVG. Substrate contacts are provided by Arg-85 and Arg-91. Residues Asn-98 and 121–123 each bind NAD(+); that span reads VSN. Residues Asn-123 and Arg-154 each coordinate substrate. His-178 functions as the Proton acceptor in the catalytic mechanism.

This sequence belongs to the LDH/MDH superfamily. MDH type 3 family.

The catalysed reaction is (S)-malate + NAD(+) = oxaloacetate + NADH + H(+). Its function is as follows. Catalyzes the reversible oxidation of malate to oxaloacetate. The chain is Malate dehydrogenase from Sulfurimonas denitrificans (strain ATCC 33889 / DSM 1251) (Thiomicrospira denitrificans (strain ATCC 33889 / DSM 1251)).